A 97-amino-acid polypeptide reads, in one-letter code: MKKAIHFQSQPVVFNCASCNSNFTIDSTAKQKDLAIDICGKCHPFYIGQLTKQTVHGRAEKLSQKFNAGKAFLENKTKKSNQAKVEKQTRHRSINEL.

Residues asparagine 75–leucine 97 are disordered. Positions lysine 84–leucine 97 are enriched in basic and acidic residues.

This sequence belongs to the bacterial ribosomal protein bL31 family. Type A subfamily. As to quaternary structure, part of the 50S ribosomal subunit.

Binds the 23S rRNA. The chain is Large ribosomal subunit protein bL31 from Mycoplasma genitalium (strain ATCC 33530 / DSM 19775 / NCTC 10195 / G37) (Mycoplasmoides genitalium).